We begin with the raw amino-acid sequence, 426 residues long: Growth-regulating factor 9 (426 aa).

Residues 92–127 (PFTPSQWMELEHQALIYKYLNAKAPIPSSLLISISK) enclose the QLQ domain. A WRC domain is found at 151-195 (DPEPGRCRRTDGKKWRCSKEAMADHKYCERHINRNRHRSRKPVEN). 2 short sequence motifs (bipartite nuclear localization signal) span residues 156-166 (RCRRTDGKKWR) and 184-191 (RNRHRSRK). The interval 184–222 (RNRHRSRKPVENQSRKTVKETPCAGSLPSSVGQGSFKKA) is disordered. Over residues 191 to 202 (KPVENQSRKTVK) the composition is skewed to basic and acidic residues.

The protein belongs to the GRF family.

It localises to the nucleus. Transcription activator that plays a regulatory role in gibberellin-induced stem elongation. This is Growth-regulating factor 9 (GRF9) from Oryza sativa subsp. japonica (Rice).